The following is a 427-amino-acid chain: UDP-N-acetylglucosamine--N-acetylmuramyl-(pentapeptide) pyrophosphoryl-undecaprenol N-acetylglucosamine transferase (427 aa).

UDP-N-acetyl-alpha-D-glucosamine contacts are provided by residues 29 to 31 (TGG), Asn141, Arg177, Ser205, Ile258, and Gln303. Positions 408 to 427 (SLHPIPDSRFPIRTSAGGAQ) are disordered.

This sequence belongs to the glycosyltransferase 28 family. MurG subfamily.

The protein resides in the cell inner membrane. It catalyses the reaction di-trans,octa-cis-undecaprenyl diphospho-N-acetyl-alpha-D-muramoyl-L-alanyl-D-glutamyl-meso-2,6-diaminopimeloyl-D-alanyl-D-alanine + UDP-N-acetyl-alpha-D-glucosamine = di-trans,octa-cis-undecaprenyl diphospho-[N-acetyl-alpha-D-glucosaminyl-(1-&gt;4)]-N-acetyl-alpha-D-muramoyl-L-alanyl-D-glutamyl-meso-2,6-diaminopimeloyl-D-alanyl-D-alanine + UDP + H(+). The protein operates within cell wall biogenesis; peptidoglycan biosynthesis. Functionally, cell wall formation. Catalyzes the transfer of a GlcNAc subunit on undecaprenyl-pyrophosphoryl-MurNAc-pentapeptide (lipid intermediate I) to form undecaprenyl-pyrophosphoryl-MurNAc-(pentapeptide)GlcNAc (lipid intermediate II). The sequence is that of UDP-N-acetylglucosamine--N-acetylmuramyl-(pentapeptide) pyrophosphoryl-undecaprenol N-acetylglucosamine transferase from Xanthomonas campestris pv. campestris (strain 8004).